Reading from the N-terminus, the 235-residue chain is LexA repressor (235 aa).

The segment at residues 47 to 67 (IREIADAVGLTSTSSVAHQLR) is a DNA-binding region (H-T-H motif). Residues Ser-159 and Lys-196 each act as for autocatalytic cleavage activity in the active site.

The protein belongs to the peptidase S24 family. Homodimer.

The enzyme catalyses Hydrolysis of Ala-|-Gly bond in repressor LexA.. Represses a number of genes involved in the response to DNA damage (SOS response), including recA and lexA. In the presence of single-stranded DNA, RecA interacts with LexA causing an autocatalytic cleavage which disrupts the DNA-binding part of LexA, leading to derepression of the SOS regulon and eventually DNA repair. In Mycobacterium leprae (strain Br4923), this protein is LexA repressor.